The sequence spans 476 residues: Aspartyl/glutamyl-tRNA(Asn/Gln) amidotransferase subunit B (476 aa).

Belongs to the GatB/GatE family. GatB subfamily. In terms of assembly, heterotrimer of A, B and C subunits.

It catalyses the reaction L-glutamyl-tRNA(Gln) + L-glutamine + ATP + H2O = L-glutaminyl-tRNA(Gln) + L-glutamate + ADP + phosphate + H(+). It carries out the reaction L-aspartyl-tRNA(Asn) + L-glutamine + ATP + H2O = L-asparaginyl-tRNA(Asn) + L-glutamate + ADP + phosphate + 2 H(+). In terms of biological role, allows the formation of correctly charged Asn-tRNA(Asn) or Gln-tRNA(Gln) through the transamidation of misacylated Asp-tRNA(Asn) or Glu-tRNA(Gln) in organisms which lack either or both of asparaginyl-tRNA or glutaminyl-tRNA synthetases. The reaction takes place in the presence of glutamine and ATP through an activated phospho-Asp-tRNA(Asn) or phospho-Glu-tRNA(Gln). The chain is Aspartyl/glutamyl-tRNA(Asn/Gln) amidotransferase subunit B from Oleidesulfovibrio alaskensis (strain ATCC BAA-1058 / DSM 17464 / G20) (Desulfovibrio alaskensis).